Here is a 309-residue protein sequence, read N- to C-terminus: Putative taste receptor type 2 member 33 (309 aa).

Residue Met-1 is a topological domain, extracellular. Residues 2-22 (VYFLPIIFSILVVFAFVLGNF) traverse the membrane as a helical segment. The Cytoplasmic portion of the chain corresponds to 23–46 (SNGFIALVNVIDWVKRQKISSADQ). Residues 47 to 67 (ILTALVVSRVGLLWVILLHWY) form a helical membrane-spanning segment. Over 68-86 (ANVFNSALYSLEVRIVASN) the chain is Extracellular. N-linked (GlcNAc...) asparagine glycosylation is present at Asn-86. The helical transmembrane segment at 87-107 (ISAVINHFSIWLAASLSIFYL) threads the bilayer. Over 108-127 (LKIANFSNLIFLHLKKRIKS) the chain is Cytoplasmic. The helical transmembrane segment at 128–148 (VVLVILLGPLVFLICNLAVIT) threads the bilayer. At 149 to 181 (MDERVWTKEYEGNVTWKIKLRNAIHLSSLTVTT) the chain is on the extracellular side. An N-linked (GlcNAc...) asparagine glycan is attached at Asn-161. A helical transmembrane segment spans residues 182–202 (LANLIPFTLSLICFLLLICSL). The Cytoplasmic portion of the chain corresponds to 203–229 (CKHLKKMQLHSKGSQDPSTKVHIKALQ). The chain crosses the membrane as a helical span at residues 230–250 (TVISFLMLCAIYFLSIMISVW). At 251-259 (NLRSLENKP) the chain is on the extracellular side. Residues 260 to 280 (VFMFCKAIRFSYPSIHPFILI) traverse the membrane as a helical segment. Residues 281-309 (WGNKKLKQTFLSVFWQVRYWVKGEKPSSP) lie on the Cytoplasmic side of the membrane.

It belongs to the G-protein coupled receptor T2R family.

The protein resides in the membrane. Putative taste receptor which may play a role in the perception of bitterness. This Homo sapiens (Human) protein is Putative taste receptor type 2 member 33.